Reading from the N-terminus, the 245-residue chain is Phosphoadenosine 5'-phosphosulfate reductase (245 aa).

C239 serves as the catalytic Nucleophile; cysteine thiosulfonate intermediate.

Belongs to the PAPS reductase family. CysH subfamily.

Its subcellular location is the cytoplasm. The enzyme catalyses [thioredoxin]-disulfide + sulfite + adenosine 3',5'-bisphosphate + 2 H(+) = [thioredoxin]-dithiol + 3'-phosphoadenylyl sulfate. It participates in sulfur metabolism; hydrogen sulfide biosynthesis; sulfite from sulfate: step 3/3. Its function is as follows. Catalyzes the formation of sulfite from phosphoadenosine 5'-phosphosulfate (PAPS) using thioredoxin as an electron donor. The chain is Phosphoadenosine 5'-phosphosulfate reductase from Alkalilimnicola ehrlichii (strain ATCC BAA-1101 / DSM 17681 / MLHE-1).